Reading from the N-terminus, the 274-residue chain is ATP synthase subunit a (274 aa).

Transmembrane regions (helical) follow at residues 43–63 (TLNI…LLVF), 103–123 (VIAP…MMDL), 149–169 (DVSI…FYSI), 223–243 (LIFI…LSVP), and 245–265 (AIFH…LTIV).

It belongs to the ATPase A chain family. In terms of assembly, F-type ATPases have 2 components, CF(1) - the catalytic core - and CF(0) - the membrane proton channel. CF(1) has five subunits: alpha(3), beta(3), gamma(1), delta(1), epsilon(1). CF(0) has three main subunits: a(1), b(2) and c(9-12). The alpha and beta chains form an alternating ring which encloses part of the gamma chain. CF(1) is attached to CF(0) by a central stalk formed by the gamma and epsilon chains, while a peripheral stalk is formed by the delta and b chains.

The protein resides in the cell inner membrane. In terms of biological role, key component of the proton channel; it plays a direct role in the translocation of protons across the membrane. This chain is ATP synthase subunit a, found in Yersinia pestis bv. Antiqua (strain Antiqua).